The following is a 181-amino-acid chain: uncharacterized protein (181 aa).

The protein belongs to the M.jannaschii MJ0150/MJ0739/MJ0745/MJ1460/MJ1642 family.

This is an uncharacterized protein from Methanocaldococcus jannaschii (strain ATCC 43067 / DSM 2661 / JAL-1 / JCM 10045 / NBRC 100440) (Methanococcus jannaschii).